A 217-amino-acid chain; its full sequence is Adenylate kinase (217 aa).

10-15 serves as a coordination point for ATP; the sequence is GAGKGT. Residues 30–59 form an NMP region; that stretch reads STGEILRAAVKSKTPMGVKAKEYMDQGALV. Residues threonine 31, arginine 36, 57 to 59, 85 to 88, and glutamine 92 each bind AMP; these read ALV and GFPR. An LID region spans residues 126-163; it reads GRRVCRACGRAFHVKFDPPLVDGVCDACGGELYQRDDD. Arginine 127 serves as a coordination point for ATP. Zn(2+) contacts are provided by cysteine 130, cysteine 133, cysteine 150, and cysteine 153. AMP is bound by residues arginine 160 and arginine 171. Glutamate 199 provides a ligand contact to ATP.

This sequence belongs to the adenylate kinase family. Monomer.

The protein resides in the cytoplasm. The enzyme catalyses AMP + ATP = 2 ADP. It functions in the pathway purine metabolism; AMP biosynthesis via salvage pathway; AMP from ADP: step 1/1. Its function is as follows. Catalyzes the reversible transfer of the terminal phosphate group between ATP and AMP. Plays an important role in cellular energy homeostasis and in adenine nucleotide metabolism. The protein is Adenylate kinase of Geobacter sulfurreducens (strain ATCC 51573 / DSM 12127 / PCA).